The following is a 529-amino-acid chain: UDP-glucuronosyltransferase 2B18 (529 aa).

An N-terminal signal peptide occupies residues 1–21 (MSVKWTSVILLIQLSFYFSSG). N-linked (GlcNAc...) asparagine glycans are attached at residues asparagine 67 and asparagine 68. A helical transmembrane segment spans residues 493–513 (VIGFLLACVATVIFIIMKCCL).

This sequence belongs to the UDP-glycosyltransferase family. In terms of tissue distribution, expressed in liver, prostate, kidney, testis, adrenal, bile duct, bladder, colon, small intestine, cerebellum and pancreas.

Its subcellular location is the microsome membrane. It is found in the endoplasmic reticulum membrane. The catalysed reaction is glucuronate acceptor + UDP-alpha-D-glucuronate = acceptor beta-D-glucuronoside + UDP + H(+). Functionally, UDPGT is of major importance in the conjugation and subsequent elimination of potentially toxic xenobiotics and endogenous compounds. This isozyme displays activity toward 3-hydroxyandrogens. It is principally active on C19 steroids having a hydroxyl group at position 3-alpha of the steroid molecule and also active on planar phenols and bile acids. This chain is UDP-glucuronosyltransferase 2B18 (UGT2B18), found in Macaca fascicularis (Crab-eating macaque).